We begin with the raw amino-acid sequence, 530 residues long: Plexin domain-containing protein 2 (530 aa).

A signal peptide spans 1–30 (MARFRRADLAAAGVMLLCHFLTDRFQFAHG). The Extracellular segment spans residues 31-455 (EPGHHTNDWI…AEKKGGTLHA (425 aa)). 2 N-linked (GlcNAc...) asparagine glycosylation sites follow: Asn-103 and Asn-160. One can recognise a PSI domain in the interval 327-372 (TCLQFNGCGPCVSSQIGFNCSWCSKLQRCSSGFDRHRQDWVDSGCP). The span at 378–387 (KEKMCEKTEP) shows a compositional bias: basic and acidic residues. Residues 378 to 399 (KEKMCEKTEPGETSQTTTTSHT) form a disordered region. Over residues 390–399 (TSQTTTTSHT) the composition is skewed to low complexity. The chain crosses the membrane as a helical span at residues 456–476 (GLIVGILILVLIIAAAILVTV). The Cytoplasmic segment spans residues 477–530 (YMYHHPTSAASIFFIERRPSRWPAMKFRRGSGHPAYAEVEPVGEKEGFIVSEQC). Phosphoserine is present on Ser-507.

Belongs to the plexin family. Interacts with CTTN. Expressed in tumor endothelium and in vessels of some normal tissues, such as the muscle and lung.

It localises to the membrane. Its function is as follows. May play a role in tumor angiogenesis. The sequence is that of Plexin domain-containing protein 2 (Plxdc2) from Mus musculus (Mouse).